Here is a 433-residue protein sequence, read N- to C-terminus: UDP-N-acetylglucosamine 1-carboxyvinyltransferase 1 (433 aa).

Phosphoenolpyruvate is bound at residue 22–23; the sequence is KN. A UDP-N-acetyl-alpha-D-glucosamine-binding site is contributed by R95. Residue C119 is the Proton donor of the active site. C119 carries the post-translational modification 2-(S-cysteinyl)pyruvic acid O-phosphothioketal. UDP-N-acetyl-alpha-D-glucosamine-binding positions include 124 to 128, D307, and V329; that span reads RPVDL.

This sequence belongs to the EPSP synthase family. MurA subfamily.

Its subcellular location is the cytoplasm. The enzyme catalyses phosphoenolpyruvate + UDP-N-acetyl-alpha-D-glucosamine = UDP-N-acetyl-3-O-(1-carboxyvinyl)-alpha-D-glucosamine + phosphate. It functions in the pathway cell wall biogenesis; peptidoglycan biosynthesis. Cell wall formation. Adds enolpyruvyl to UDP-N-acetylglucosamine. This is UDP-N-acetylglucosamine 1-carboxyvinyltransferase 1 from Latilactobacillus sakei subsp. sakei (strain 23K) (Lactobacillus sakei subsp. sakei).